The chain runs to 201 residues: Ras-related protein Rab-9A (201 aa).

At Ala-2 the chain carries N-acetylalanine. The GTP site is built by Gly-17, Val-18, Gly-19, Lys-20, Ser-21, Ser-22, Asp-33, Ser-34, His-38, and Thr-39. Mg(2+) is bound at residue Ser-21. The short motif at 31–42 is the Switch 1 element; sequence KFDSQLFHTIGV. Position 34 is a phosphoserine (Ser-34). Mg(2+) contacts are provided by Thr-39 and Asp-62. The short motif at 64–78 is the Switch 2 element; that stretch reads AGQERFRSLRTPFYR. Gly-65, Asn-124, Lys-125, Asp-127, Ala-155, and Lys-156 together coordinate GTP. Phosphoserine is present on Ser-179. A Phosphothreonine modification is found at Thr-187. 2 S-geranylgeranyl cysteine lipidation sites follow: Cys-200 and Cys-201.

This sequence belongs to the small GTPase superfamily. Rab family. In terms of assembly, interacts (preferentially in its GTP-bound form) with GCC2 (via its GRIP domain). Interacts (GTP-bound form) with SGSM1; the GDP-bound form has much lower affinity for SGSM1. Interacts with SGSM2. The GTP-bound form but not the GDP-bound form interacts with HPS4. The GTP-bound form but not the GDP-bound form interacts with BLOC-3 complex (heterodimer of HPS1 and HPS4) but does not interact with HPS1 alone. Interacts (GTP-bound form) with NDE1; two RAB9A-GTP molecules lie on the opposite sides of the NDE1 homodimer; the interaction leads to RAB9A-dynein motor tethering. Interacts (GTP-bound form) with NDEL1. Mg(2+) is required as a cofactor.

Its subcellular location is the cell membrane. The protein resides in the endoplasmic reticulum membrane. The protein localises to the golgi apparatus membrane. It localises to the late endosome. It is found in the cytoplasmic vesicle. Its subcellular location is the phagosome membrane. The protein resides in the phagosome. The protein localises to the cytoplasmic vesicle membrane. It localises to the melanosome. The catalysed reaction is GTP + H2O = GDP + phosphate + H(+). Regulated by guanine nucleotide exchange factors (GEFs) which promote the exchange of bound GDP for free GTP. Regulated by GTPase activating proteins (GAPs) which increase the GTP hydrolysis activity. Inhibited by GDP dissociation inhibitors (GDIs). Functionally, the small GTPases Rab are key regulators of intracellular membrane trafficking, from the formation of transport vesicles to their fusion with membranes. Rabs cycle between an inactive GDP-bound form and an active GTP-bound form that is able to recruit to membranes different sets of downstream effectors directly responsible for vesicle formation, movement, tethering and fusion. RAB9A is involved in the transport of proteins between the endosomes and the trans-Golgi network (TGN). Specifically uses NDE1/NDEL1 as an effector to interact with the dynein motor complex in order to control retrograde trafficking of RAB9-associated late endosomes to the TGN. Involved in the recruitment of SGSM2 to melanosomes and is required for the proper trafficking of melanogenic enzymes TYR, TYRP1 and DCT/TYRP2 to melanosomes in melanocytes. The sequence is that of Ras-related protein Rab-9A from Mus musculus (Mouse).